We begin with the raw amino-acid sequence, 138 residues long: Large ribosomal subunit protein uL16 (138 aa).

Residues 1–13 (MLQPARRKYRKEQ) show a composition bias toward basic residues. The tract at residues 1 to 21 (MLQPARRKYRKEQKGRNTGIA) is disordered.

This sequence belongs to the universal ribosomal protein uL16 family. In terms of assembly, part of the 50S ribosomal subunit.

Functionally, binds 23S rRNA and is also seen to make contacts with the A and possibly P site tRNAs. The sequence is that of Large ribosomal subunit protein uL16 from Albidiferax ferrireducens (strain ATCC BAA-621 / DSM 15236 / T118) (Rhodoferax ferrireducens).